Here is a 450-residue protein sequence, read N- to C-terminus: Glutamate-1-semialdehyde 2,1-aminomutase (450 aa).

At Lys262 the chain carries N6-(pyridoxal phosphate)lysine.

Belongs to the class-III pyridoxal-phosphate-dependent aminotransferase family. HemL subfamily. As to quaternary structure, homodimer. Requires pyridoxal 5'-phosphate as cofactor.

It localises to the cytoplasm. It catalyses the reaction (S)-4-amino-5-oxopentanoate = 5-aminolevulinate. It functions in the pathway porphyrin-containing compound metabolism; protoporphyrin-IX biosynthesis; 5-aminolevulinate from L-glutamyl-tRNA(Glu): step 2/2. The protein is Glutamate-1-semialdehyde 2,1-aminomutase of Campylobacter hominis (strain ATCC BAA-381 / DSM 21671 / CCUG 45161 / LMG 19568 / NCTC 13146 / CH001A).